The following is a 422-amino-acid chain: Receptor homology region, transmembrane domain- and RING domain-containing protein 3 (422 aa).

Residues Met1–Ala22 form the signal peptide. Residues Gly23–Tyr168 are Lumenal-facing. N-linked (GlcNAc...) asparagine glycosylation is present at Asn31. Cysteines 64 and 89 form a disulfide. The PA domain maps to Leu81 to Ala146. Residues Ala169–Phe189 form a helical membrane-spanning segment. Over Tyr190–Asp422 the chain is Cytoplasmic. The RING-type; atypical zinc-finger motif lies at Cys232–Lys274. Residues Leu344–Leu368 are disordered. Polar residues predominate over residues Ser349–Leu368.

The protein resides in the prevacuolar compartment membrane. It localises to the protein storage vacuole membrane. Its function is as follows. Involved in the trafficking of vacuolar proteins. May function as a sorting receptor for protein trafficking to the protein storage vacuole (PSV). This Arabidopsis thaliana (Mouse-ear cress) protein is Receptor homology region, transmembrane domain- and RING domain-containing protein 3 (RMR3).